We begin with the raw amino-acid sequence, 151 residues long: Transcription elongation factor GreA (151 aa).

The stretch at 41–62 forms a coiled coil; it reads AEYHAAREKQSFIEGRIKELEA.

It belongs to the GreA/GreB family.

Its function is as follows. Necessary for efficient RNA polymerase transcription elongation past template-encoded arresting sites. The arresting sites in DNA have the property of trapping a certain fraction of elongating RNA polymerases that pass through, resulting in locked ternary complexes. Cleavage of the nascent transcript by cleavage factors such as GreA or GreB allows the resumption of elongation from the new 3'terminus. GreA releases sequences of 2 to 3 nucleotides. This chain is Transcription elongation factor GreA, found in Cereibacter sphaeroides (strain ATCC 17023 / DSM 158 / JCM 6121 / CCUG 31486 / LMG 2827 / NBRC 12203 / NCIMB 8253 / ATH 2.4.1.) (Rhodobacter sphaeroides).